The chain runs to 212 residues: External core antigen (212 aa).

Residues 1–19 form the signal peptide; the sequence is MQLFHLCLIISCSCPTVQA. The segment at 25-27 is HBEAG; that stretch reads GWL. The segment at 172–212 is disordered; the sequence is LPETTVVRRRGRSPRRRTPSPRRRRSKSPRRRRSQSRESQC. The segment covering 178–205 has biased composition (basic residues); sequence VRRRGRSPRRRTPSPRRRRSKSPRRRRS. Residues 184–189 form a 1; half-length repeat; it reads SPRRRT. Positions 184–205 are 3 X 7 AA repeats of S-P-R-R-R-R-S; that stretch reads SPRRRTPSPRRRRSKSPRRRRS. Residues 184-212 constitute a propeptide that is removed on maturation; sequence SPRRRTPSPRRRRSKSPRRRRSQSRESQC. 2 repeat units span residues 191 to 197 and 199 to 205.

The protein belongs to the orthohepadnavirus precore antigen family. In terms of assembly, homodimerizes. Post-translationally, phosphorylated. Cleaved by host furin.

The protein resides in the secreted. The protein localises to the host nucleus. In terms of biological role, may regulate immune response to the intracellular capsid in acting as a T-cell tolerogen, by having an immunoregulatory effect which prevents destruction of infected cells by cytotoxic T-cells. This immune regulation may predispose to chronicity during perinatal infections and prevent severe liver injury during adult infections. The sequence is that of External core antigen from Hepatitis B virus genotype C subtype adr (isolate Japan/Nishioka/1983) (HBV-C).